The sequence spans 123 residues: Small ribosomal subunit protein uS12 (123 aa).

Aspartate 89 is subject to 3-methylthioaspartic acid. A disordered region spans residues 102 to 123; that stretch reads LDTSGVQDRRQRRSKYGAKRPK. Residues 111-123 show a composition bias toward basic residues; sequence RQRRSKYGAKRPK.

It belongs to the universal ribosomal protein uS12 family. Part of the 30S ribosomal subunit. Contacts proteins S8 and S17. May interact with IF1 in the 30S initiation complex.

Functionally, with S4 and S5 plays an important role in translational accuracy. Interacts with and stabilizes bases of the 16S rRNA that are involved in tRNA selection in the A site and with the mRNA backbone. Located at the interface of the 30S and 50S subunits, it traverses the body of the 30S subunit contacting proteins on the other side and probably holding the rRNA structure together. The combined cluster of proteins S8, S12 and S17 appears to hold together the shoulder and platform of the 30S subunit. In Lawsonia intracellularis (strain PHE/MN1-00), this protein is Small ribosomal subunit protein uS12.